The following is a 620-amino-acid chain: MALLQIAEPGMSTAPHQHRLAVGIDLGTTNSLVATVRNSIPEVLTDEEGRALLPSVVHYMKNGHAQIGYKALAAQNTDPKNTIASVKRFMGRGLKDIAYVENLPYDFLDTPGMVQLKTVAGVKSPVEISAEILATLRQQAEDALGDELVGAVITVPAYFDDAQRQATKDAAKLAGLNVLRLLNEPTAAAIAYGLDNGSEGVFAVYDLGGGTFDVSILKLTKGVFEVLSTGGDSALGGDDFDHRLLCWIIEQAKLSPLSDEDLSVLMVKSREAKELLSTKAETHIDAALGSGEEVHLTVTAADFVKMTQHLVAKTITPTKKALRDADLTVDDVDGVVMVGGATRMPHIRKAVGEFFQATPLANIDPDKVVALGAAVQANLLAGNRAAGDDWLLLDVIPLSLGIETMGGLVEKVIPRNSTIPCARAQEFTTFKDGQTAMAIHIVQGERELVSDCRSLARFELRGIPPMAAGAARIRVTYQVDADGLLSVSARELRSGVEASISVKPSYGLADDQIAQMLQDSFKSADVDMALRALREEQVEAERIVLATQSALDADGALLTDDERNAVTSLLAAVQQSSKGDDHHAIKAAVEALAQGTEEFAARRMDRSVRTALSGKKLDEI.

It belongs to the heat shock protein 70 family.

Chaperone involved in the maturation of iron-sulfur cluster-containing proteins. Has a low intrinsic ATPase activity which is markedly stimulated by HscB. The protein is Chaperone protein HscA homolog of Janthinobacterium sp. (strain Marseille) (Minibacterium massiliensis).